Consider the following 3726-residue polypeptide: Zinc finger homeobox protein 3 (3726 aa).

Disordered regions lie at residues M1–V79 and M95–L129. Residues V79 to H103 form a C2H2-type 1 zinc finger. The span at T116–V126 shows a compositional bias: acidic residues. A C2H2-type 2 zinc finger spans residues L282 to H305. Residues S417–A557 are disordered. The residue at position 426 (S426) is a Phosphoserine. Phosphothreonine is present on T428. Positions S431 to P459 are enriched in basic and acidic residues. Acidic residues-rich tracts occupy residues A460–E491 and D500–S510. Over residues S528–A557 the composition is skewed to polar residues. Phosphoserine occurs at positions 535 and 573. The tract at residues D590–H621 is disordered. C2H2-type zinc fingers lie at residues V641 to H664, L672 to H695, and F727 to H751. The C2H2-type 6; atypical zinc finger occupies W805–H829. The segment at F946–E969 adopts a C2H2-type 7; degenerate zinc-finger fold. A C2H2-type 8; atypical zinc finger spans residues Y985–H1009. The C2H2-type 9; atypical zinc finger occupies L1041–H1065. The C2H2-type 10; atypical zinc finger occupies Y1089 to H1113. Residues L1125 to K1228 form a disordered region. Residues D1149–G1159 are compositionally biased toward acidic residues. Composition is skewed to polar residues over residues G1175–Q1191 and S1199–S1217. S1207 carries the post-translational modification Phosphoserine. Residues Y1233–H1256 form a C2H2-type 11; atypical zinc finger. The C2H2-type 12 zinc finger occupies L1262–H1285. Positions D1320 to P1361 are disordered. 3 C2H2-type zinc fingers span residues F1370–H1395, Y1411–H1433, and T1439–H1462. A disordered region spans residues E1500 to K1539. Over residues S1514 to D1526 the composition is skewed to polar residues. The C2H2-type 16 zinc finger occupies Y1555 to H1579. S1600 bears the Phosphoserine mark. The C2H2-type 17 zinc finger occupies F1606–H1630. Disordered stretches follow at residues L1639 to N1678, N1706 to Q1738, and L1866 to A1943. Residues S1643 to G1669 show a composition bias toward low complexity. The span at E1717–A1727 shows a compositional bias: basic and acidic residues. Low complexity predominate over residues L1866–Q1878. The segment covering H1879 to P1902 has biased composition (basic and acidic residues). Residues L1990–H2013 form a C2H2-type 18 zinc finger. Disordered stretches follow at residues Y2037 to S2089 and N2211 to K2249. Pro residues predominate over residues P2041 to A2066. The homeobox 1 DNA-binding region spans N2152 to N2211. Positions S2214–I2223 are enriched in polar residues. The homeobox 2 DNA-binding region spans K2249–Y2308. The C2H2-type 19; atypical zinc finger occupies Y2335–C2358. A Glycyl lysine isopeptide (Lys-Gly) (interchain with G-Cter in SUMO1) cross-link involves residue K2356. Disordered regions lie at residues T2383 to A2405 and N2429 to L2529. The span at Q2458–Q2478 shows a compositional bias: low complexity. Residues P2479 to S2507 are compositionally biased toward pro residues. Residues P2508–L2521 show a composition bias toward low complexity. A C2H2-type 20 zinc finger spans residues Y2539 to H2561. The Nuclear localization signal motif lies at K2624–K2626. The segment at E2628–T2656 is disordered. S2634 is subject to Phosphoserine. The homeobox 3 DNA-binding region spans D2650 to Q2709. The segment at R2720–H2743 adopts a C2H2-type 21 zinc-finger fold. Polar residues predominate over residues S2780–G2789. Residues S2780–P2805 form a disordered region. Phosphoserine is present on residues S2795 and S2804. A Glycyl lysine isopeptide (Lys-Gly) (interchain with G-Cter in SUMO1); alternate cross-link involves residue K2815. A Glycyl lysine isopeptide (Lys-Gly) (interchain with G-Cter in SUMO2); alternate cross-link involves residue K2815. The tract at residues A2850 to S2877 is disordered. A phosphoserine mark is found at S2900 and S2904. The disordered stretch occupies residues V2920 to K2955. Positions A2929–K2944 are enriched in low complexity. Positions P2952 to K3011 form a DNA-binding region, homeobox 4. The C2H2-type 22 zinc finger occupies T3032–H3056. Disordered regions lie at residues F3145 to G3274 and Q3415 to A3476. Over residues P3147–K3156 the composition is skewed to polar residues. Low complexity predominate over residues P3181–A3199. Over residues P3200 to A3221 the composition is skewed to pro residues. A compositionally biased stretch (low complexity) spans A3222–Q3234. A compositionally biased stretch (basic and acidic residues) spans Q3235–E3267. K3262 is covalently cross-linked (Glycyl lysine isopeptide (Lys-Gly) (interchain with G-Cter in SUMO1)). S3434 carries the phosphoserine modification. The segment covering P3435–P3453 has biased composition (basic and acidic residues). S3457 carries the phosphoserine modification. The segment at Y3552–H3576 adopts a C2H2-type 23 zinc-finger fold. The tract at residues A3588 to L3726 is disordered. Composition is skewed to low complexity over residues S3605 to D3618 and S3645 to S3677. The residue at position 3616 (S3616) is a Phosphoserine. S3700 is subject to Phosphoserine. The segment covering G3715–L3726 has biased composition (polar residues).

In terms of assembly, interacts with ALKBH4 and PIAS3. Interacts with FNBP3. Interacts with ESR1, RUNX3, TRIM25, SMAD2 and SMAD3. Phosphorylated at Ser-2634 in both embryonic and adult brain. Phosphorylation at Ser-1600, Ser-2795, Ser-2804, Ser-2900, Ser-3434, Ser-3616 and Ser-3700 is restricted to the embryonic brain. Hyperphosphorylation in embryonic brain protects ZFHX3 from calpain/CAPN1-mediated degradation. Post-translationally, ubiquitinated, leading to its proteasomal degradation. In terms of processing, nuclear localization is essential for its sumoylation. In terms of tissue distribution, expressed in suprachiasmatic nucleus (SCN) of the brain (at protein level). Expressed in skeletal muscle. Levels of expression are high in myoblasts but low in differentiated muscle. Expressed in the heart, primarily in the atria.

It is found in the nucleus. The protein resides in the cytoplasm. Functionally, transcriptional regulator which can act as an activator or a repressor. Inhibits the enhancer element of the AFP gene by binding to its AT-rich core sequence. In concert with SMAD-dependent TGF-beta signaling can repress the transcription of AFP via its interaction with SMAD2/3. Regulates the circadian locomotor rhythms via transcriptional activation of neuropeptidergic genes which are essential for intercellular synchrony and rhythm amplitude in the suprachiasmatic nucleus (SCN) of the brain. Regulator of myoblasts differentiation through the binding to the AT-rich sequence of MYF6 promoter and promoter repression. Down-regulates the MUC5AC promoter in gastric cancer. In association with RUNX3, up-regulates CDKN1A promoter activity following TGF-beta stimulation. The polypeptide is Zinc finger homeobox protein 3 (Zfhx3) (Mus musculus (Mouse)).